Reading from the N-terminus, the 194-residue chain is Phosphoheptose isomerase (194 aa).

Residues 37–194 (ISNSFKQGGK…LIEFEMAKQA (158 aa)) form the SIS domain. Residue 52–54 (NGG) coordinates substrate. 2 residues coordinate Zn(2+): His-61 and Glu-65. Substrate contacts are provided by residues Glu-65, 93–94 (ND), 119–121 (STS), Ser-124, and Gln-172. Positions 172 and 180 each coordinate Zn(2+).

Belongs to the SIS family. GmhA subfamily. As to quaternary structure, homotetramer. Requires Zn(2+) as cofactor.

It is found in the cytoplasm. The enzyme catalyses 2 D-sedoheptulose 7-phosphate = D-glycero-alpha-D-manno-heptose 7-phosphate + D-glycero-beta-D-manno-heptose 7-phosphate. Its pathway is carbohydrate biosynthesis; D-glycero-D-manno-heptose 7-phosphate biosynthesis; D-glycero-alpha-D-manno-heptose 7-phosphate and D-glycero-beta-D-manno-heptose 7-phosphate from sedoheptulose 7-phosphate: step 1/1. Catalyzes the isomerization of sedoheptulose 7-phosphate in D-glycero-D-manno-heptose 7-phosphate. In Haemophilus influenzae (strain PittEE), this protein is Phosphoheptose isomerase.